The primary structure comprises 383 residues: Smad nuclear-interacting protein 1 (383 aa).

Over residues 1 to 10 (MKAGKSERER) the composition is skewed to basic and acidic residues. The interval 1–209 (MKAGKSERER…NRSKEVPVKE (209 aa)) is disordered. Position 18 is a phosphoserine (Ser18). Lys28 is covalently cross-linked (Glycyl lysine isopeptide (Lys-Gly) (interchain with G-Cter in SUMO); alternate). Residue Lys28 forms a Glycyl lysine isopeptide (Lys-Gly) (interchain with G-Cter in SUMO1); alternate linkage. A Glycyl lysine isopeptide (Lys-Gly) (interchain with G-Cter in SUMO2); alternate cross-link involves residue Lys28. Positions 28-43 (KQERLSPEPVAHRRPD) are enriched in basic and acidic residues. Ser33, Ser48, and Ser50 each carry phosphoserine. Positions 44-56 (APAASLSPPAAEP) are enriched in low complexity. Positions 59-90 (SGHRGSRARSPAKKKSKSSGRRSKSPRTKRSQ) are enriched in basic residues. Ser91 is modified (phosphoserine). 2 stretches are compositionally biased toward basic and acidic residues: residues 99 to 134 (VKQE…ERDR) and 143 to 159 (RSSD…DRDS). Lys100 is covalently cross-linked (Glycyl lysine isopeptide (Lys-Gly) (interchain with G-Cter in SUMO2)). Phosphoserine is present on Ser145. Residues 153–194 (QDRDRDSQNLQAQEEERDFHNARRREHRQQNESAGSEAQEVI) are a coiled coil. Lys210 participates in a covalent cross-link: Glycyl lysine isopeptide (Lys-Gly) (interchain with G-Cter in SUMO2). Residues 268–331 (YLLGRHRRIA…NGTFLNNKRI (64 aa)) form the FHA domain. Residues 359–369 (ESSDTSELDRK) are compositionally biased toward basic and acidic residues. Residues 359-383 (ESSDTSELDRKEDEDDEEEEMVSDS) are disordered. Positions 370-383 (EDEDDEEEEMVSDS) are enriched in acidic residues. Phosphoserine is present on Ser381.

As to quaternary structure, component of activated spliceosome complexes. Binds SMAD4 and CREBBP/EP300. Component of the minor spliceosome, which splices U12-type introns. Binds the SMAD1/OAZ1/PSMB4 complex. Interacts with DROSHA and SMARCA4. Component of the SNARP complex which consists at least of SNIP1, SNW1, THRAP3, BCLAF1 and PNN. Post-translationally, degraded by the proteasome upon binding to the SMAD1/OAZ1/PSMB4 complex.

It is found in the nucleus. Functionally, required for pre-mRNA splicing as component of the spliceosome. As a component of the minor spliceosome, involved in the splicing of U12-type introns in pre-mRNAs. Down-regulates NF-kappa-B signaling by competing with RELA for CREBBP/EP300 binding. Involved in the microRNA (miRNA) biogenesis. May be involved in cyclin-D1/CCND1 mRNA stability through the SNARP complex which associates with both the 3'end of the CCND1 gene and its mRNA. The protein is Smad nuclear-interacting protein 1 (Snip1) of Mus musculus (Mouse).